We begin with the raw amino-acid sequence, 490 residues long: Aspartyl aminopeptidase 4 (490 aa).

H97 contacts Zn(2+). Position 173 (H173) interacts with substrate. Residues D273, E308, E309, and D362 each contribute to the Zn(2+) site. E308 serves as a coordination point for substrate. D362, H365, K390, and Y397 together coordinate substrate. Residue H456 participates in Zn(2+) binding.

It belongs to the peptidase M18 family. As to quaternary structure, tetrahedron-shaped homododecamer built from six homodimers. Requires Zn(2+) as cofactor.

It localises to the cytoplasm. Its subcellular location is the vacuole lumen. It catalyses the reaction Release of an N-terminal aspartate or glutamate from a peptide, with a preference for aspartate.. Its activity is regulated as follows. The metalloproteases inhibitors EDTA and 1.10-phenanthroline both inhibit the activity, whereas bestatin, an inhibitor of most aminopeptidases, does not affect enzyme activity. Its function is as follows. Aspartyl aminopeptidase that contributes to peptide degradation both in the cytosol and the vacuole. Cells may respond to environmental conditions by changing the distributions of the cytosolic enzyme to the vacuole when cells need more active vacuolar degradation. The protein is Aspartyl aminopeptidase 4 (APE4) of Saccharomyces cerevisiae (strain ATCC 204508 / S288c) (Baker's yeast).